The sequence spans 645 residues: Serine/threonine-protein kinase Nek11 (645 aa).

The Protein kinase domain occupies 29 to 287 (YVLQQKLGSG…AIEILKIPYL (259 aa)). ATP-binding positions include 35–43 (LGSGSFGTV) and lysine 61. Catalysis depends on aspartate 158, which acts as the Proton acceptor. At serine 273 the chain carries Phosphoserine; by CHEK1. Positions 346–385 (RLRKLQAADEKARKLKKIVEEKYEENSKRMQELRSRNFQQ) form a coiled coil. The tract at residues 399–445 (GMEEKEEQPEGRLSCSPQDEDEERWQGREEESDEPTLENLPESQPIP) is disordered.

Belongs to the protein kinase superfamily. NEK Ser/Thr protein kinase family. NIMA subfamily. Interacts with isoform 1 of NEK2. It depends on Mn(2+) as a cofactor. Mg(2+) serves as cofactor. Post-translationally, phosphorylated by NEK2. Phosphorylation at Ser-273 is important for its activation. As to expression, poorly expressed in cerebellum, trachea, lung, appendix, and uterus.

The protein localises to the nucleus. The protein resides in the nucleolus. The catalysed reaction is L-seryl-[protein] + ATP = O-phospho-L-seryl-[protein] + ADP + H(+). The enzyme catalyses L-threonyl-[protein] + ATP = O-phospho-L-threonyl-[protein] + ADP + H(+). Its activity is regulated as follows. Autorepressed by intramolecular binding of the C-terminus which dissociates following phosphorylation by NEK2 isoform 1 in G1/S-arrested cells. NEK2 isoform 2 is largely not present in the nucleolus, and does not appear to phosphorylate NEK11. Activated in response to DNA damage. Inhibited by zinc. Its function is as follows. Protein kinase which plays an important role in the G2/M checkpoint response to DNA damage. Controls degradation of CDC25A by directly phosphorylating it on residues whose phosphorylation is required for BTRC-mediated polyubiquitination and degradation. The protein is Serine/threonine-protein kinase Nek11 of Homo sapiens (Human).